A 639-amino-acid chain; its full sequence is Mediator of RNA polymerase II transcription subunit 17 (639 aa).

Residues 32–43 are compositionally biased toward polar residues; that stretch reads ASATVTTNGTTA. Disordered regions lie at residues 32 to 68 and 130 to 159; these read ASAT…EEHS and MGDA…NNDS. Residues 48-57 show a composition bias toward low complexity; that stretch reads DSGSQQSVSS. The segment covering 58–68 has biased composition (polar residues); the sequence is APIQQNSEEHS. Residues 245–271 adopt a coiled-coil conformation; the sequence is WKLRSLEDSKALLKENYAKLQKSLEVE.

It belongs to the Mediator complex subunit 17 family. Component of the Mediator complex.

The protein resides in the nucleus. Its function is as follows. Component of the Mediator complex, a coactivator involved in the regulated transcription of nearly all RNA polymerase II-dependent genes. Mediator functions as a bridge to convey information from gene-specific regulatory proteins to the basal RNA polymerase II transcription machinery. Mediator is recruited to promoters by direct interactions with regulatory proteins and serves as a scaffold for the assembly of a functional preinitiation complex with RNA polymerase II and the general transcription factors. The polypeptide is Mediator of RNA polymerase II transcription subunit 17 (SRB4) (Eremothecium gossypii (strain ATCC 10895 / CBS 109.51 / FGSC 9923 / NRRL Y-1056) (Yeast)).